A 418-amino-acid polypeptide reads, in one-letter code: L-glutamine:2-deoxy-scyllo-inosose aminotransferase (418 aa).

Position 192 is an N6-(pyridoxal phosphate)lysine (K192).

The protein belongs to the DegT/DnrJ/EryC1 family. L-glutamine:2-deoxy-scyllo-inosose/scyllo-inosose aminotransferase subfamily. The cofactor is pyridoxal 5'-phosphate.

It carries out the reaction 2-deoxy-L-scyllo-inosose + L-glutamine = 2-deoxy-scyllo-inosamine + 2-oxoglutaramate. It catalyses the reaction 3-amino-2,3-dideoxy-scyllo-inosose + L-glutamine = 2-deoxystreptamine + 2-oxoglutaramate. Its pathway is metabolic intermediate biosynthesis; 2-deoxystreptamine biosynthesis; 2-deoxystreptamine from D-glucose 6-phosphate: step 2/4. It functions in the pathway metabolic intermediate biosynthesis; 2-deoxystreptamine biosynthesis; 2-deoxystreptamine from D-glucose 6-phosphate: step 4/4. It participates in antibiotic biosynthesis; butirosin biosynthesis. In terms of biological role, catalyzes the PLP-dependent transamination of 2-deoxy-scyllo-inosose (2-DOI) to form 2-deoxy-scyllo-inosamine (2-DOIA) using L-glutamine as the amino donor. Also catalyzes the transamination of 3-amino-2,3-dideoxy-scyllo-inosose (keto-2-DOIA) into 2-deoxystreptamine (2-DOS). The sequence is that of L-glutamine:2-deoxy-scyllo-inosose aminotransferase (btrR) from Niallia circulans (Bacillus circulans).